The sequence spans 89 residues: Small ribosomal subunit protein bS20 (89 aa).

It belongs to the bacterial ribosomal protein bS20 family.

Its function is as follows. Binds directly to 16S ribosomal RNA. In Wolbachia pipientis subsp. Culex pipiens (strain wPip), this protein is Small ribosomal subunit protein bS20.